Here is an 89-residue protein sequence, read N- to C-terminus: Small ribosomal subunit protein uS17 (89 aa).

It belongs to the universal ribosomal protein uS17 family. Part of the 30S ribosomal subunit.

One of the primary rRNA binding proteins, it binds specifically to the 5'-end of 16S ribosomal RNA. The sequence is that of Small ribosomal subunit protein uS17 from Bacteroides fragilis (strain ATCC 25285 / DSM 2151 / CCUG 4856 / JCM 11019 / LMG 10263 / NCTC 9343 / Onslow / VPI 2553 / EN-2).